The primary structure comprises 239 residues: Probable transcriptional regulatory protein BCG9842_B4761 (239 aa).

It belongs to the TACO1 family. YeeN subfamily.

The protein resides in the cytoplasm. The chain is Probable transcriptional regulatory protein BCG9842_B4761 from Bacillus cereus (strain G9842).